The sequence spans 66 residues: UPF0337 protein bsl1473 (66 aa).

It belongs to the UPF0337 (CsbD) family.

In Bradyrhizobium diazoefficiens (strain JCM 10833 / BCRC 13528 / IAM 13628 / NBRC 14792 / USDA 110), this protein is UPF0337 protein bsl1473.